The sequence spans 343 residues: MDQGQTLSRLLDSYGTDARTRAVAAAVGAIAEASIEISDLIGQGALAGITGAAHGASNADGDVQKDLDVRAEAAIVAALKNVPYAALASEESDTLLMGDPQAPISIAYDPLDGSSNIDTNMTVGTIFSVIPNEPGVAPFTAPGSCQLAAGFVVYGPQTSLVLTLGDGVDIFTLDRAAKTYRLIRERVQVPADTAEYAINASNHRHWEQPVRDFVDECLAGTDGPRAKNFNMRWIGSLVAEAYRILTRGGVFLYPADSRPGYGEGRLRVLYETHPMAFVMEQAGGAASTGRERVLDVVASTTHQRSPLIMGSSDKVHRIVELHLDPAAASRTAPLFGRRGLFRT.

Residues Glu90, Asp109, Leu111, and Asp112 each contribute to the Mg(2+) site. Substrate is bound by residues Asp112–Ser115 and Asn199. Glu271 is a binding site for Mg(2+).

Belongs to the FBPase class 1 family. In terms of assembly, homotetramer. It depends on Mg(2+) as a cofactor.

The protein resides in the cytoplasm. It carries out the reaction beta-D-fructose 1,6-bisphosphate + H2O = beta-D-fructose 6-phosphate + phosphate. The protein operates within carbohydrate biosynthesis; Calvin cycle. In Rhodopseudomonas palustris (strain HaA2), this protein is Fructose-1,6-bisphosphatase class 1.